A 654-amino-acid polypeptide reads, in one-letter code: Dystrobrevin beta (654 aa).

Met-1 carries the post-translational modification N-acetylmethionine. Phosphothreonine occurs at positions 11, 69, 179, and 212. The ZZ-type zinc-finger motif lies at 238–294; that stretch reads FHPVECSYCHCESMMGFRYRCQQCHNYQLCQNCFWRGHAGGPHSNQHQMKELSSWKS. Zn(2+) is bound by residues Cys-243, Cys-246, Cys-258, Cys-261, Cys-267, Cys-270, His-280, and His-284. Ser-394 bears the Phosphoserine mark. Residues 399-448 are syntrophin-binding region; the sequence is DEEHRLIARYAARLAAEAGNMTRPPTDASFNFDANKQQRQLIAELENKNR. Phosphothreonine is present on Thr-424. The stretch at 429 to 519 forms a coiled coil; sequence NFDANKQQRQ…LEGLMKLLKA (91 aa). The segment at 520–562 is disordered; the sequence is QATGSPHTSPTHGGGRSMPMPVRSTSAGSTPTHGPQDSLSGVG. Polar residues-rich tracts occupy residues 521 to 530 and 542 to 558; these read ATGSPHTSPT and RSTS…QDSL.

It belongs to the dystrophin family. Dystrobrevin subfamily. In terms of assembly, interacts with dystrophin short form DP71 and syntrophins SNTG1 and SNTG2. Binds DTNBP1. Forms a specific complex composed of DMD, SNTB2 and SNTA1 in neuron; the interaction with SNTB2 and SNTA1 is DMD independent. Interacts with UTRN and dystrophin short form DP71 in the kidney and liver. Interacts with SNTB1, SNTB2 and SNTA1 in kidney and liver. Interacts with KIF5A. Interacts with HMG20A and HMG20B. Interacts with OLFM1. Interacts with PRKAR2B and PRKAR1A. Phosphorylated by PKA. Phosphorylation at Thr-11 alters the interaction with KIF5A. Expressed in neurons. In the isocortex, expressed most prominently in the somata (including the nuclei) and the dendrites of the pyramidal cells. Expressed in the hippocampus CA1, CA2, and CA3 neurons, namely in the initial segments of dendrites. Expressed in the Purkinje cells, molecular layer interneurons, and granule cells of cerebellum. Expressed in axon fascicles associated with the spinal trigeminal tract and in the internal capsule in the brainstem.

The protein resides in the cytoplasm. It is found in the postsynaptic density. It localises to the cell projection. The protein localises to the dendrite. Its subcellular location is the basal cell membrane. The protein resides in the postsynapse. It is found in the nucleus. In terms of biological role, scaffolding protein that assembles DMD and SNTA1 molecules to the basal membrane of kidney cells and liver sinusoids. May function as a repressor of the SYN1 promoter through the binding of repressor element-1 (RE-1), in turn regulates SYN1 expression and may be involved in cell proliferation regulation during the early phase of neural differentiation. May be required for proper maturation and function of a subset of inhibitory synapses. This is Dystrobrevin beta from Rattus norvegicus (Rat).